The sequence spans 226 residues: Uracil-DNA glycosylase (226 aa).

Catalysis depends on Asp-64, which acts as the Proton acceptor.

Belongs to the uracil-DNA glycosylase (UDG) superfamily. UNG family.

The protein localises to the cytoplasm. The catalysed reaction is Hydrolyzes single-stranded DNA or mismatched double-stranded DNA and polynucleotides, releasing free uracil.. Excises uracil residues from the DNA which can arise as a result of misincorporation of dUMP residues by DNA polymerase or due to deamination of cytosine. This is Uracil-DNA glycosylase from Vibrio parahaemolyticus serotype O3:K6 (strain RIMD 2210633).